Here is a 205-residue protein sequence, read N- to C-terminus: Small ribosomal subunit protein uS4 (205 aa).

The interval 18 to 49 (NIWGRPKSPVNKREYGPGQHGQRRKGKLSDFG) is disordered. The region spanning 94 to 157 (RRLDTVVYRA…KQLALVLEAN (64 aa)) is the S4 RNA-binding domain.

Belongs to the universal ribosomal protein uS4 family. As to quaternary structure, part of the 30S ribosomal subunit. Contacts protein S5. The interaction surface between S4 and S5 is involved in control of translational fidelity.

In terms of biological role, one of the primary rRNA binding proteins, it binds directly to 16S rRNA where it nucleates assembly of the body of the 30S subunit. With S5 and S12 plays an important role in translational accuracy. In Nitrobacter winogradskyi (strain ATCC 25391 / DSM 10237 / CIP 104748 / NCIMB 11846 / Nb-255), this protein is Small ribosomal subunit protein uS4.